We begin with the raw amino-acid sequence, 383 residues long: tRNA (adenine(58)-N(1))-methyltransferase catalytic subunit TRM61 (383 aa).

Residues Val-94, 121-124 (SGSF), Glu-139, Arg-144, 168-169 (DV), and Asp-203 each bind S-adenosyl-L-methionine. Ser-302 carries the post-translational modification Phosphoserine.

This sequence belongs to the class I-like SAM-binding methyltransferase superfamily. TRM61 family. In terms of assembly, heterotetramer; composed of two copies of TRM6/GCD10 and two copies of TRM61/GCD14.

It localises to the nucleus. It catalyses the reaction adenosine(58) in tRNA + S-adenosyl-L-methionine = N(1)-methyladenosine(58) in tRNA + S-adenosyl-L-homocysteine + H(+). Its function is as follows. Catalytic subunit of tRNA (adenine-N(1)-)-methyltransferase, which catalyzes the formation of N(1)-methyladenine at position 58 (m1A58) in initiator methionyl-tRNA. GCD14 is also required for repression of GCN4 mRNA translation by the upstream open reading frames (uORFs) under conditions of amino acid sufficiency. In Saccharomyces cerevisiae (strain ATCC 204508 / S288c) (Baker's yeast), this protein is tRNA (adenine(58)-N(1))-methyltransferase catalytic subunit TRM61 (GCD14).